The sequence spans 147 residues: Hemoglobin subunit beta (147 aa).

Residue Val-2 is modified to N-acetylvaline. A Globin domain is found at 3 to 147 (HLSGSEKTAV…VSHALAHKYH (145 aa)). Thr-13 bears the Phosphothreonine mark. Ser-45 bears the Phosphoserine mark. Lys-60 bears the N6-acetyllysine mark. His-64 is a binding site for heme b. Residue Lys-83 is modified to N6-acetyllysine. Residue His-93 participates in heme b binding. Cys-94 is subject to S-nitrosocysteine. Lys-145 bears the N6-acetyllysine mark.

The protein belongs to the globin family. As to quaternary structure, heterotetramer of two alpha chains and two beta chains. As to expression, red blood cells.

In terms of biological role, involved in oxygen transport from the lung to the various peripheral tissues. The protein is Hemoglobin subunit beta (HBB) of Tachyglossus aculeatus aculeatus (Southeast Australian short-beaked echidna).